The primary structure comprises 120 residues: Large ribosomal subunit protein uL22 (120 aa).

This sequence belongs to the universal ribosomal protein uL22 family. In terms of assembly, part of the 50S ribosomal subunit.

In terms of biological role, this protein binds specifically to 23S rRNA; its binding is stimulated by other ribosomal proteins, e.g. L4, L17, and L20. It is important during the early stages of 50S assembly. It makes multiple contacts with different domains of the 23S rRNA in the assembled 50S subunit and ribosome. Its function is as follows. The globular domain of the protein is located near the polypeptide exit tunnel on the outside of the subunit, while an extended beta-hairpin is found that lines the wall of the exit tunnel in the center of the 70S ribosome. This Rippkaea orientalis (strain PCC 8801 / RF-1) (Cyanothece sp. (strain PCC 8801)) protein is Large ribosomal subunit protein uL22.